The chain runs to 335 residues: UPF0353 protein Mflv_3659 (335 aa).

2 helical membrane-spanning segments follow: residues 18–38 (WFFLFFFVVIGLVALYIVVQL) and 67–87 (LPAVLMILSLVSFTIAMAGPT). Residues 98-294 (VVMLVIDVSQ…EQLKQVFTNL (197 aa)) enclose the VWFA domain. Residues 309–329 (VGWLRLGAGVLALAALGALLI) form a helical membrane-spanning segment.

The protein belongs to the UPF0353 family.

The protein localises to the cell membrane. This is UPF0353 protein Mflv_3659 from Mycolicibacterium gilvum (strain PYR-GCK) (Mycobacterium gilvum (strain PYR-GCK)).